Reading from the N-terminus, the 539-residue chain is UDP-N-acetylmuramate--L-alanine ligase (539 aa).

165–171 (GTHGKTT) is a binding site for ATP.

It belongs to the MurCDEF family.

The protein resides in the cytoplasm. It catalyses the reaction UDP-N-acetyl-alpha-D-muramate + L-alanine + ATP = UDP-N-acetyl-alpha-D-muramoyl-L-alanine + ADP + phosphate + H(+). Its pathway is cell wall biogenesis; peptidoglycan biosynthesis. In terms of biological role, cell wall formation. The sequence is that of UDP-N-acetylmuramate--L-alanine ligase from Trichodesmium erythraeum (strain IMS101).